A 134-amino-acid chain; its full sequence is Small ribosomal subunit protein uS8c (134 aa).

The protein belongs to the universal ribosomal protein uS8 family. Part of the 30S ribosomal subunit.

It localises to the plastid. It is found in the chloroplast. Its function is as follows. One of the primary rRNA binding proteins, it binds directly to 16S rRNA central domain where it helps coordinate assembly of the platform of the 30S subunit. In Nicotiana tomentosiformis (Tobacco), this protein is Small ribosomal subunit protein uS8c (rps8).